The following is a 766-amino-acid chain: Signal transducer and activator of transcription 3.2 (766 aa).

An Essential for nuclear import motif is present at residues 150–162; it reads DVRKKVQDLEQKM. One can recognise an SH2 domain in the interval 580-670; it reads WNEGYIIGFI…DATNILVSPL (91 aa). Serine 725 is subject to Phosphoserine; by NLK.

It belongs to the transcription factor STAT family. In terms of assembly, forms a homodimer or a heterodimer with a related family member. Interacts with nlk.2. Phosphorylation of both tyrosine and serine residues, together with dimerization, is required for mesoderm induction.

Its subcellular location is the cytoplasm. The protein resides in the nucleus. Transcription factor that binds to target promoter sequences and activates transcription upon il6st/gp130 stimulation. Mediates ventralization of embryos, at least in part via inhibition of smad2 signaling. Required for hairy2 to induce dll1/delta1 and promote neural crest cell proliferation and differentiation. Involved in TGFbeta-mediated mesoderm induction in early embryos, acting downstream of map3k7/tak1 and nlk.2. This is Signal transducer and activator of transcription 3.2 (stat3.2) from Xenopus laevis (African clawed frog).